Here is a 93-residue protein sequence, read N- to C-terminus: uncharacterized protein (93 aa).

The disordered stretch occupies residues 73-93; sequence KWTVSGPVKQDTGKTDPAEKN. Positions 83–93 are enriched in basic and acidic residues; sequence DTGKTDPAEKN.

This is an uncharacterized protein from Rhodobacter capsulatus (Rhodopseudomonas capsulata).